We begin with the raw amino-acid sequence, 298 residues long: ATP synthase F(1) complex subunit gamma, mitochondrial (298 aa).

The transit peptide at 1–25 (MFSRAGVAGLSAWTVQPQWIQVRNM) directs the protein to the mitochondrion. At Lys39 the chain carries N6-acetyllysine. Lys49 carries the N6-succinyllysine modification. Position 55 is an N6-acetyllysine (Lys55). Position 115 is an N6-acetyllysine; alternate (Lys115). Lys115 is subject to N6-succinyllysine; alternate. Phosphoserine is present on Ser146. The residue at position 154 (Lys154) is an N6-acetyllysine; alternate. Lys154 carries the post-translational modification N6-succinyllysine; alternate. At Lys197 the chain carries N6-acetyllysine. N6-succinyllysine is present on Lys270.

The protein belongs to the ATPase gamma chain family. In terms of assembly, component of the ATP synthase complex composed at least of ATP5F1A/subunit alpha, ATP5F1B/subunit beta, ATP5MC1/subunit c (homooctomer), MT-ATP6/subunit a, MT-ATP8/subunit 8, ATP5ME/subunit e, ATP5MF/subunit f, ATP5MG/subunit g, ATP5MK/subunit k, ATP5MJ/subunit j, ATP5F1C/subunit gamma, ATP5F1D/subunit delta, ATP5F1E/subunit epsilon, ATP5PF/subunit F6, ATP5PB/subunit b, ATP5PD/subunit d, ATP5PO/subunit OSCP. ATP synthase complex consists of a soluble F(1) head domain (subunits alpha(3) and beta(3)) - the catalytic core - and a membrane F(0) domain - the membrane proton channel (subunits c, a, 8, e, f, g, k and j). These two domains are linked by a central stalk (subunits gamma, delta, and epsilon) rotating inside the F1 region and a stationary peripheral stalk (subunits F6, b, d, and OSCP). Interacts with FLVCR2; this interaction occurs in the absence of heme and is disrupted upon heme binding.

It is found in the mitochondrion inner membrane. Functionally, subunit gamma, of the mitochondrial membrane ATP synthase complex (F(1)F(0) ATP synthase or Complex V) that produces ATP from ADP in the presence of a proton gradient across the membrane which is generated by electron transport complexes of the respiratory chain. ATP synthase complex consist of a soluble F(1) head domain - the catalytic core - and a membrane F(1) domain - the membrane proton channel. These two domains are linked by a central stalk rotating inside the F(1) region and a stationary peripheral stalk. During catalysis, ATP synthesis in the catalytic domain of F(1) is coupled via a rotary mechanism of the central stalk subunits to proton translocation. In vivo, can only synthesize ATP although its ATP hydrolase activity can be activated artificially in vitro. With the central stalk subunit delta, is essential for the biogenesis of F(1) catalytic part of the ATP synthase complex namely in the formation of F1 assembly intermediate. This Bos taurus (Bovine) protein is ATP synthase F(1) complex subunit gamma, mitochondrial.